We begin with the raw amino-acid sequence, 243 residues long: ATP-dependent dethiobiotin synthetase BioD (243 aa).

Position 12–17 (12–17 (DVGKTF)) interacts with ATP. Thr-16 contributes to the Mg(2+) binding site. Lys-37 is an active-site residue. Residue Ser-41 coordinates substrate. ATP-binding positions include Asp-54, 115–118 (EGCG), and 179–180 (NM). Asp-54 and Glu-115 together coordinate Mg(2+).

This sequence belongs to the dethiobiotin synthetase family. As to quaternary structure, homodimer. Requires Mg(2+) as cofactor.

It is found in the cytoplasm. The enzyme catalyses (7R,8S)-7,8-diammoniononanoate + CO2 + ATP = (4R,5S)-dethiobiotin + ADP + phosphate + 3 H(+). The protein operates within cofactor biosynthesis; biotin biosynthesis; biotin from 7,8-diaminononanoate: step 1/2. In terms of biological role, catalyzes a mechanistically unusual reaction, the ATP-dependent insertion of CO2 between the N7 and N8 nitrogen atoms of 7,8-diaminopelargonic acid (DAPA, also called 7,8-diammoniononanoate) to form a ureido ring. In Caldicellulosiruptor bescii (strain ATCC BAA-1888 / DSM 6725 / KCTC 15123 / Z-1320) (Anaerocellum thermophilum), this protein is ATP-dependent dethiobiotin synthetase BioD.